Consider the following 326-residue polypeptide: Eukaryotic translation initiation factor 2 subunit 1 (326 aa).

Positions 24–95 constitute an S1 motif domain; the sequence is DDLIMVKVNR…QKGYIDLSKR (72 aa). The residue at position 59 (S59) is a Phosphoserine; by eIK1, eIK2 and PK4. A disordered region spans residues 291–326; the sequence is LDKHDGLSSDDEYSSDGDEDDSSNDDDNSSDEDDDD. Positions 298-326 are enriched in acidic residues; that stretch reads SSDDEYSSDGDEDDSSNDDDNSSDEDDDD.

The protein belongs to the eIF-2-alpha family. In terms of processing, phosphorylates at Ser-59 in mature trophozoites, schizonts and gametocytes but not in rings and young trophozoites. Phosphorylates at Ser-59 by eIK2 in salivary gland sporozoites but not in midgut and hemocoel sporozoites. Dephosphorylated at Ser-59 by UIS2. Phosphorylation of eIF2alpha subunit of the pre-initiation complex eIF2 inhibits recycling of inactive eIF2-GDP to active eIF2-GTP by limiting the activity of the guanine nucleotide exchange factor eIF2B and thus, inhibits protein translation.

It localises to the cytoplasm. Its subcellular location is the stress granule. In terms of biological role, functions in the early steps of protein synthesis by forming a ternary complex with GTP and initiator tRNA. May regulate protein translation in response to amino acid starvation. May regulate protein at various stages of parasite development. This chain is Eukaryotic translation initiation factor 2 subunit 1, found in Plasmodium berghei (strain Anka).